The following is a 98-amino-acid chain: (4S)-4-hydroxy-5-phosphonooxypentane-2,3-dione isomerase (98 aa).

Positions 2 to 91 (NVTLVEINIK…MSQPRQKRSF (90 aa)) constitute an ABM domain.

Belongs to the LsrG family. In terms of assembly, homodimer.

It localises to the cytoplasm. The catalysed reaction is (2S)-2-hydroxy-3,4-dioxopentyl phosphate = 3-hydroxy-2,4-dioxopentyl phosphate. Involved in the degradation of phospho-AI-2, thereby terminating induction of the lsr operon and closing the AI-2 signaling cycle. Catalyzes the conversion of (4S)-4-hydroxy-5-phosphonooxypentane-2,3-dione (P-DPD) to 3-hydroxy-5-phosphonooxypentane-2,4-dione (P-HPD). The protein is (4S)-4-hydroxy-5-phosphonooxypentane-2,3-dione isomerase of Klebsiella pneumoniae subsp. pneumoniae (strain ATCC 700721 / MGH 78578).